A 67-amino-acid polypeptide reads, in one-letter code: Protein C' (67 aa).

This sequence belongs to the rhabdoviruses C protein family.

In terms of biological role, seems to stimulates transcription by the viral polymerase. May play a role in viral pathogenesis or transmission by insects vectors. The polypeptide is Protein C' (P) (Aedes (Bovine)).